The primary structure comprises 160 residues: Deoxyuridine 5'-triphosphate nucleotidohydrolase (160 aa).

Substrate contacts are provided by residues 72–74 (RSG), asparagine 85, and 89–91 (TID).

The protein belongs to the dUTPase family. Mg(2+) serves as cofactor.

The catalysed reaction is dUTP + H2O = dUMP + diphosphate + H(+). It participates in pyrimidine metabolism; dUMP biosynthesis; dUMP from dCTP (dUTP route): step 2/2. In terms of biological role, this enzyme is involved in nucleotide metabolism: it produces dUMP, the immediate precursor of thymidine nucleotides and it decreases the intracellular concentration of dUTP so that uracil cannot be incorporated into DNA. This chain is Deoxyuridine 5'-triphosphate nucleotidohydrolase, found in Methylocella silvestris (strain DSM 15510 / CIP 108128 / LMG 27833 / NCIMB 13906 / BL2).